A 297-amino-acid chain; its full sequence is 4-hydroxy-tetrahydrodipicolinate synthase (297 aa).

A pyruvate-binding site is contributed by T55. Y144 serves as the catalytic Proton donor/acceptor. K172 serves as the catalytic Schiff-base intermediate with substrate. I213 contributes to the pyruvate binding site.

The protein belongs to the DapA family. As to quaternary structure, homotetramer; dimer of dimers.

It is found in the cytoplasm. It carries out the reaction L-aspartate 4-semialdehyde + pyruvate = (2S,4S)-4-hydroxy-2,3,4,5-tetrahydrodipicolinate + H2O + H(+). The protein operates within amino-acid biosynthesis; L-lysine biosynthesis via DAP pathway; (S)-tetrahydrodipicolinate from L-aspartate: step 3/4. Its function is as follows. Catalyzes the condensation of (S)-aspartate-beta-semialdehyde [(S)-ASA] and pyruvate to 4-hydroxy-tetrahydrodipicolinate (HTPA). This Lactococcus lactis subsp. lactis (strain IL1403) (Streptococcus lactis) protein is 4-hydroxy-tetrahydrodipicolinate synthase.